A 404-amino-acid polypeptide reads, in one-letter code: Cysteine desulfurase IscS (404 aa).

Pyridoxal 5'-phosphate-binding positions include 75–76, Asn155, Gln183, and 203–205; these read AT and SAH. Lys206 carries the N6-(pyridoxal phosphate)lysine modification. Pyridoxal 5'-phosphate is bound at residue Thr243. Cys328 (cysteine persulfide intermediate) is an active-site residue. Cys328 contributes to the [2Fe-2S] cluster binding site.

The protein belongs to the class-V pyridoxal-phosphate-dependent aminotransferase family. NifS/IscS subfamily. As to quaternary structure, homodimer. Forms a heterotetramer with IscU, interacts with other sulfur acceptors. The cofactor is pyridoxal 5'-phosphate.

The protein resides in the cytoplasm. The catalysed reaction is (sulfur carrier)-H + L-cysteine = (sulfur carrier)-SH + L-alanine. It functions in the pathway cofactor biosynthesis; iron-sulfur cluster biosynthesis. Its function is as follows. Master enzyme that delivers sulfur to a number of partners involved in Fe-S cluster assembly, tRNA modification or cofactor biosynthesis. Catalyzes the removal of elemental sulfur atoms from cysteine to produce alanine. Functions as a sulfur delivery protein for Fe-S cluster synthesis onto IscU, an Fe-S scaffold assembly protein, as well as other S acceptor proteins. The protein is Cysteine desulfurase IscS of Ectopseudomonas mendocina (strain ymp) (Pseudomonas mendocina).